We begin with the raw amino-acid sequence, 916 residues long: Nonsense-mediated mRNA decay factor SMG8 (916 aa).

A disordered region spans residues 566–626 (LENSNRTPDT…KNYASQGDAD (61 aa)). A compositionally biased stretch (polar residues) spans 589–604 (LSGSQKSQDSASNLTF).

The protein belongs to the SMG8 family.

Involved in nonsense-mediated decay (NMD) of mRNAs containing premature stop codons. Probable component of kinase complex containing SMG1 and recruited to stalled ribosomes. This Aedes aegypti (Yellowfever mosquito) protein is Nonsense-mediated mRNA decay factor SMG8.